A 484-amino-acid chain; its full sequence is Glutamyl-tRNA(Gln) amidotransferase subunit A (484 aa).

Catalysis depends on charge relay system residues Lys74 and Ser149. Ser173 acts as the Acyl-ester intermediate in catalysis.

The protein belongs to the amidase family. GatA subfamily. As to quaternary structure, heterotrimer of A, B and C subunits.

The enzyme catalyses L-glutamyl-tRNA(Gln) + L-glutamine + ATP + H2O = L-glutaminyl-tRNA(Gln) + L-glutamate + ADP + phosphate + H(+). In terms of biological role, allows the formation of correctly charged Gln-tRNA(Gln) through the transamidation of misacylated Glu-tRNA(Gln) in organisms which lack glutaminyl-tRNA synthetase. The reaction takes place in the presence of glutamine and ATP through an activated gamma-phospho-Glu-tRNA(Gln). The polypeptide is Glutamyl-tRNA(Gln) amidotransferase subunit A (Prochlorococcus marinus subsp. pastoris (strain CCMP1986 / NIES-2087 / MED4)).